The chain runs to 283 residues: Probable replication-associated protein repA1 (283 aa).

This sequence belongs to the IncFII RepA family.

In terms of biological role, this protein is essential for plasmid replication; it is involved in copy control functions. In Buchnera aphidicola subsp. Acyrthosiphon pisum (strain APS) (Acyrthosiphon pisum symbiotic bacterium), this protein is Probable replication-associated protein repA1 (repA1).